The primary structure comprises 102 residues: Monothiol glutaredoxin-S8 (102 aa).

Positions 1-101 (MEKIQKMISE…PMLKRFGALW (101 aa)) constitute a Glutaredoxin domain. Cysteine 21 contacts [2Fe-2S] cluster. Residues 99-102 (ALWL) carry the Responsive for interaction with TGA factors motif.

It belongs to the glutaredoxin family. CC-type subfamily.

The protein localises to the cytoplasm. It is found in the nucleus. Functionally, may only reduce GSH-thiol disulfides, but not protein disulfides. The chain is Monothiol glutaredoxin-S8 (GRXS8) from Arabidopsis thaliana (Mouse-ear cress).